Consider the following 392-residue polypeptide: MADTPSVAVQAPPGYGKTELFHLPLIALASKGDVKYVSFLFVPYTVLLANCMIRLGRRGCLNVAPVRNFIEEGYDGVTDLYVGIYDDLASTNFTDRIAAWENIVECTFRTNNVKLGYLIVDEFHNFETEVYRQSQFGGITNLDFDAFEKAIFLSGTAPEAVADAALQRIGLTGLAKKSMDINELKRSEDLSRGLSSYPTRMFNLIKEKSEVPLGHVHKIWKKVESQPEEALKLLLALFEIEPESKAIVVASTTNEVEELACSWRKYFRVVWIHGKLGAAEKVSRTKEFVTDGSMQVLIGTKLVTEGIDIKQLMMVIMLDNRLNIIELIQGVGRLRDGGLCYLLSRKNSWAARNRKGELPPIKEGCITEQVREFYGLESKKGKKGQHVGCCVC.

Residues 1-175 (MADTPSVAVQ…LQRIGLTGLA (175 aa)) enclose the Helicase ATP-binding domain. 11–18 (APPGYGKT) contacts ATP. Residues 232–381 (KLLLALFEIE…EFYGLESKKG (150 aa)) enclose the Helicase C-terminal domain.

Belongs to the helicase family. Yeast subtelomeric Y' repeat subfamily.

In terms of biological role, catalyzes DNA unwinding and is involved in telomerase-independent telomere maintenance. In Saccharomyces cerevisiae (strain ATCC 204508 / S288c) (Baker's yeast), this protein is Y' element ATP-dependent helicase YFL066C.